Here is a 20-residue protein sequence, read N- to C-terminus: Phylloseptin-O1 (20 aa).

Position 20 is a glycine amide (glycine 20).

In terms of tissue distribution, expressed by the skin glands.

The protein localises to the secreted. Its function is as follows. Has antiprotozoal activity against T.cruzi. In Pithecopus oreades (Orange-legged leaf frog), this protein is Phylloseptin-O1 (psn4).